A 619-amino-acid chain; its full sequence is Dihydroxy-acid dehydratase (619 aa).

A Mg(2+)-binding site is contributed by Asp81. Cys122 is a binding site for [2Fe-2S] cluster. Mg(2+) is bound by residues Asp123 and Lys124. Position 124 is an N6-carboxylysine (Lys124). Residue Cys198 coordinates [2Fe-2S] cluster. Residue Glu494 participates in Mg(2+) binding. Ser520 (proton acceptor) is an active-site residue.

The protein belongs to the IlvD/Edd family. Homodimer. The cofactor is [2Fe-2S] cluster. It depends on Mg(2+) as a cofactor.

The catalysed reaction is (2R)-2,3-dihydroxy-3-methylbutanoate = 3-methyl-2-oxobutanoate + H2O. It catalyses the reaction (2R,3R)-2,3-dihydroxy-3-methylpentanoate = (S)-3-methyl-2-oxopentanoate + H2O. It functions in the pathway amino-acid biosynthesis; L-isoleucine biosynthesis; L-isoleucine from 2-oxobutanoate: step 3/4. It participates in amino-acid biosynthesis; L-valine biosynthesis; L-valine from pyruvate: step 3/4. In terms of biological role, functions in the biosynthesis of branched-chain amino acids. Catalyzes the dehydration of (2R,3R)-2,3-dihydroxy-3-methylpentanoate (2,3-dihydroxy-3-methylvalerate) into 2-oxo-3-methylpentanoate (2-oxo-3-methylvalerate) and of (2R)-2,3-dihydroxy-3-methylbutanoate (2,3-dihydroxyisovalerate) into 2-oxo-3-methylbutanoate (2-oxoisovalerate), the penultimate precursor to L-isoleucine and L-valine, respectively. The protein is Dihydroxy-acid dehydratase of Neisseria gonorrhoeae (strain ATCC 700825 / FA 1090).